Here is a 248-residue protein sequence, read N- to C-terminus: ATP synthase subunit a, chloroplastic (248 aa).

5 consecutive transmembrane segments (helical) span residues 37–57, 96–116, 135–155, 200–220, and 221–241; these read AQVLITSWVVIAILLGLSIVA, VPFIGTMFLFIFVSNWSGALF, INTTVALALLTSVAYFYAGLH, LVVAVLISLVPLVVPIPMMFL, and GLFTSAIQALIFATLAAAYIG.

Belongs to the ATPase A chain family. As to quaternary structure, F-type ATPases have 2 components, CF(1) - the catalytic core - and CF(0) - the membrane proton channel. CF(1) has five subunits: alpha(3), beta(3), gamma(1), delta(1), epsilon(1). CF(0) has four main subunits: a, b, b' and c.

It is found in the plastid. It localises to the chloroplast thylakoid membrane. In terms of biological role, key component of the proton channel; it plays a direct role in the translocation of protons across the membrane. The sequence is that of ATP synthase subunit a, chloroplastic from Angiopteris evecta (Mule's foot fern).